The sequence spans 119 residues: Holo-[acyl-carrier-protein] synthase (119 aa).

Asp8 and Glu60 together coordinate Mg(2+).

The protein belongs to the P-Pant transferase superfamily. AcpS family. Requires Mg(2+) as cofactor.

The protein resides in the cytoplasm. It catalyses the reaction apo-[ACP] + CoA = holo-[ACP] + adenosine 3',5'-bisphosphate + H(+). Transfers the 4'-phosphopantetheine moiety from coenzyme A to a Ser of acyl-carrier-protein. The protein is Holo-[acyl-carrier-protein] synthase of Mycoplasma pneumoniae (strain ATCC 29342 / M129 / Subtype 1) (Mycoplasmoides pneumoniae).